Here is a 552-residue protein sequence, read N- to C-terminus: Phosphoglucomutase (552 aa).

Serine 143 serves as the catalytic Phosphoserine intermediate. Positions 143, 295, 297, and 299 each coordinate Mg(2+).

It belongs to the phosphohexose mutase family. Mg(2+) is required as a cofactor.

The enzyme catalyses alpha-D-glucose 1-phosphate = alpha-D-glucose 6-phosphate. The protein operates within glycolipid metabolism; diglucosyl-diacylglycerol biosynthesis. In terms of biological role, catalyzes the interconversion between glucose-6-phosphate and alpha-glucose-1-phosphate. This is the first step in the biosynthesis of diglucosyl-diacylglycerol (Glc2-DAG), i.e. the predominant glycolipid found in the S.aureus membrane, which is also used as a membrane anchor for lipoteichoic acid (LTA). The protein is Phosphoglucomutase (pgcA) of Staphylococcus aureus (strain MRSA252).